Reading from the N-terminus, the 997-residue chain is Glutamate [NMDA] receptor subunit 1 (997 aa).

A signal peptide spans 1-26 (MAMAEFVFCRPLFGLAIVLLVAPIDA). Over 27 to 573 (AQRHTASDNP…TLVSFLQPFS (547 aa)) the chain is Extracellular. Asn258, Asn314, Asn345, Asn397, Asn454, Asn481, and Asn501 each carry an N-linked (GlcNAc...) asparagine glycan. Residues 530 to 532 (PLT) and Arg537 contribute to the glycine site. The helical transmembrane segment at 574 to 594 (NTLWILVMVSVHVVALVLYLL) threads the bilayer. The Cytoplasmic portion of the chain corresponds to 595–651 (DRFSPFGRFKLSHSDSNEEKALNLSSAVWFAWGVLLNSGIGEGTPRSFSARVLGMVW). The chain crosses the membrane as a helical span at residues 652–672 (AGFAMIIVASYTANLAAFLVL). At 673-831 (ERPKTKLSGI…KTPNTLGLKN (159 aa)) the chain is on the extracellular side. N-linked (GlcNAc...) asparagine glycosylation is present at Asn693. Residues Ser703 and Asp747 each coordinate glycine. Residues 832 to 852 (MAGVFILVGVGIAGGVGLIII) traverse the membrane as a helical segment. The Cytoplasmic portion of the chain corresponds to 853–997 (EVIYKKHQVK…YTSDVSHLVV (145 aa)). The tract at residues 970–997 (LGKTRPQQSVLPPRYSPGYTSDVSHLVV) is disordered. Over residues 987 to 997 (GYTSDVSHLVV) the composition is skewed to polar residues.

It belongs to the glutamate-gated ion channel (TC 1.A.10.1) family. In terms of assembly, forms a heteromeric NMDA channel with Nmdar2. In terms of tissue distribution, highly expressed in adult heads: in the brain and ring gland. Low expression throughout the entire brain is also seen. Higher expression levels were observed in some scattered cell bodies and part of their fibers, including those from several pairs of DPM (dorsal-posterior-medial) neurons surrounding the calyx, DAL (dorsal-anterior-lateral) and DPL (dorsal-posterior-lateral) neurons in the lateral protocerebrum (LP), VAL (ventral-anterior-lateral) neurons in the anterior protocerebrum, and two pairs of VP (ventral-posterior) neurons in the posterior protocerebrum. Many cell bodies in the optic lobes show preferential expression. Punctuate expression is notably detected in many brain regions including the superior medial protocerebrum. Weakly expressed in the antennal lobes and central complex.

The protein resides in the cell membrane. Its subcellular location is the postsynaptic cell membrane. It localises to the postsynaptic density. NMDA receptor subtype of glutamate-gated ion channels with high calcium permeability and voltage-dependent sensitivity to magnesium. Mediated by glycine. This protein plays a key role in synaptic plasticity, synaptogenesis, excitotoxicity, memory acquisition and learning. It mediates neuronal functions in glutamate neurotransmission. Is involved in the cell surface targeting of NMDA receptors. Plays a role in associative learning and in long-term memory consolidation. The chain is Glutamate [NMDA] receptor subunit 1 from Drosophila melanogaster (Fruit fly).